The following is a 481-amino-acid chain: uncharacterized protein (481 aa).

A run of 13 helical transmembrane segments spans residues 3-23 (YLPMMIVFPLIMAIIMNLLHG), 33-53 (FITAAILIILPFISQYGYYYF), 75-95 (QAIIVTLSLIASLVLITGMGE), 99-119 (NNMFVTLSLMGFASIAAIVLA), 122-142 (IFNLYVFFEIVSIVQAGLVFL), 155-175 (YMIMGNVAAALMLLGIAFLLA), 196-216 (IYGGLLLLIVGLAYGAGLPPF), 241-261 (FVLVGLMIIILKLFNGLDYFA), 264-284 (HAVLIALGVLAMVFGVVMALL), 303-323 (VATGLALGTPLGIVAGIFHAI), 351-371 (GGLLPLMPSVAFMVLCAKLAI), 400-420 (IIMIIVSIGTFVSMMKAFYLI), and 443-463 (VFSLFVLTALCIIIGLYPDIV).

The protein localises to the cell membrane. This is an uncharacterized protein from Methanocaldococcus jannaschii (strain ATCC 43067 / DSM 2661 / JAL-1 / JCM 10045 / NBRC 100440) (Methanococcus jannaschii).